A 72-amino-acid polypeptide reads, in one-letter code: Translation initiation factor IF-1 1 (72 aa).

An S1-like domain is found at 1-72; it reads MSKEDVIQMQ…TKGRIVFRAK (72 aa).

Belongs to the IF-1 family. Component of the 30S ribosomal translation pre-initiation complex which assembles on the 30S ribosome in the order IF-2 and IF-3, IF-1 and N-formylmethionyl-tRNA(fMet); mRNA recruitment can occur at any time during PIC assembly.

The protein resides in the cytoplasm. In terms of biological role, one of the essential components for the initiation of protein synthesis. Stabilizes the binding of IF-2 and IF-3 on the 30S subunit to which N-formylmethionyl-tRNA(fMet) subsequently binds. Helps modulate mRNA selection, yielding the 30S pre-initiation complex (PIC). Upon addition of the 50S ribosomal subunit IF-1, IF-2 and IF-3 are released leaving the mature 70S translation initiation complex. In Thiobacillus denitrificans (strain ATCC 25259 / T1), this protein is Translation initiation factor IF-1 1.